The following is a 271-amino-acid chain: MLKIADTTFTSRLFTGTGKFSSPELMLEALRASGSQLITMAMKRVDLQSGNDAILAPLRQLGVRLLPNTSGAKTAEEAIFAARLAREALNTHWVKLEIHPDVRYLLPDPIETLKAAEVLVKEGFVVLPYCGADPVLCKRLEEVGCAAVMPLGSPIGSNLGLRTRDFLQIIIEQSKVPVVVDAGIGAPSHALEALELGADAVLVNTAIAVAHSPVQMAHAFRLAVESGERARLAGLGASPFNPSQPDTLQLRATATSPLTGFLSQLEEQDHV.

Residue Lys95 is the Schiff-base intermediate with DXP of the active site. 1-deoxy-D-xylulose 5-phosphate-binding positions include Gly156, 182-183 (AG), and 204-205 (NT).

It belongs to the ThiG family. As to quaternary structure, homotetramer. Forms heterodimers with either ThiH or ThiS.

It localises to the cytoplasm. It carries out the reaction [ThiS sulfur-carrier protein]-C-terminal-Gly-aminoethanethioate + 2-iminoacetate + 1-deoxy-D-xylulose 5-phosphate = [ThiS sulfur-carrier protein]-C-terminal Gly-Gly + 2-[(2R,5Z)-2-carboxy-4-methylthiazol-5(2H)-ylidene]ethyl phosphate + 2 H2O + H(+). Its pathway is cofactor biosynthesis; thiamine diphosphate biosynthesis. In terms of biological role, catalyzes the rearrangement of 1-deoxy-D-xylulose 5-phosphate (DXP) to produce the thiazole phosphate moiety of thiamine. Sulfur is provided by the thiocarboxylate moiety of the carrier protein ThiS. In vitro, sulfur can be provided by H(2)S. The sequence is that of Thiazole synthase from Yersinia pseudotuberculosis serotype O:1b (strain IP 31758).